The sequence spans 304 residues: Non-specific ribonucleoside hydrolase RihC (304 aa).

The active site involves H233.

The protein belongs to the IUNH family. RihC subfamily.

Its function is as follows. Hydrolyzes both purine and pyrimidine ribonucleosides with a broad-substrate specificity. This is Non-specific ribonucleoside hydrolase RihC from Escherichia coli O45:K1 (strain S88 / ExPEC).